Reading from the N-terminus, the 258-residue chain is Regulatory protein RecX (258 aa).

It belongs to the RecX family.

The protein localises to the cytoplasm. In terms of biological role, modulates RecA activity. The polypeptide is Regulatory protein RecX (Streptococcus sanguinis (strain SK36)).